Here is a 196-residue protein sequence, read N- to C-terminus: Acyl-homoserine-lactone synthase (196 aa).

It belongs to the autoinducer synthase family.

It catalyses the reaction a fatty acyl-[ACP] + S-adenosyl-L-methionine = an N-acyl-L-homoserine lactone + S-methyl-5'-thioadenosine + holo-[ACP] + H(+). Functionally, required for the synthesis of a yet unknown N-aceyl-homoserine lactone (N-aceyl-HSL), an autoinducer molecule which binds to PhzR and thus regulates phenazine production. The polypeptide is Acyl-homoserine-lactone synthase (phzI) (Pseudomonas chlororaphis (Pseudomonas aureofaciens)).